The chain runs to 202 residues: Securin (202 aa).

Alanine 2 is modified (N-acetylalanine). The tract at residues 35 to 94 (LDGRSQVSTPRFGKTFDAPPALPKATRKALGTVNRATEKSVKTKGPLKQKQPSFSAKKMT) is disordered. A D-box motif is present at residues 61–64 (RKAL). 2 consecutive short sequence motifs (TEK-box) follow at residues 71–73 (TEK) and 94–96 (TEK). Positions 163-173 (PPSPVRMPSPP) match the SH3-binding motif. Position 165 is a phosphoserine; by CDK1 (serine 165).

This sequence belongs to the securin family. In terms of assembly, interacts with RPS10 and DNAJA1. Interacts with the caspase-like ESPL1, and prevents its protease activity probably by covering its active site. Interacts with TP53 and blocks its activity probably by blocking its binding to DNA. Interacts with the Ku 70 kDa subunit of ds-DNA kinase. Interacts with PTTG1IP. Post-translationally, phosphorylated at Ser-165 by CDK1 during mitosis. In terms of processing, phosphorylated in vitro by ds-DNA kinase. Ubiquitinated through 'Lys-11' linkage of ubiquitin moieties by the anaphase promoting complex (APC) at the onset of anaphase, conducting to its degradation. 'Lys-11'-linked ubiquitination is mediated by the E2 ligase UBE2C/UBCH10.

The protein localises to the cytoplasm. It is found in the nucleus. Its function is as follows. Regulatory protein, which plays a central role in chromosome stability, in the p53/TP53 pathway, and DNA repair. Probably acts by blocking the action of key proteins. During the mitosis, it blocks Separase/ESPL1 function, preventing the proteolysis of the cohesin complex and the subsequent segregation of the chromosomes. At the onset of anaphase, it is ubiquitinated, conducting to its destruction and to the liberation of ESPL1. Its function is however not limited to a blocking activity, since it is required to activate ESPL1. Negatively regulates the transcriptional activity and related apoptosis activity of TP53. The negative regulation of TP53 may explain the strong transforming capability of the protein when it is overexpressed. May also play a role in DNA repair via its interaction with Ku, possibly by connecting DNA damage-response pathways with sister chromatid separation. The protein is Securin (PTTG1) of Gorilla gorilla gorilla (Western lowland gorilla).